The following is a 791-amino-acid chain: ABC multidrug transporter mdr2 (791 aa).

An N-linked (GlcNAc...) asparagine glycan is attached at N147. The next 2 membrane-spanning stretches (helical) occupy residues A182 to I202 and L220 to A240. An ABC transmembrane type-1 domain is found at A182–K471. The N-linked (GlcNAc...) asparagine glycan is linked to N303. 2 helical membrane passes run G307–V324 and L326–Y346. N-linked (GlcNAc...) asparagine glycans are attached at residues N352 and N421. 2 helical membrane-spanning segments follow: residues M422–I442 and L445–F465. Residues I504–E741 enclose the ABC transporter domain. N-linked (GlcNAc...) asparagine glycosylation occurs at N508. G539–S546 is a binding site for ATP. A glycan (N-linked (GlcNAc...) asparagine) is linked at N692. Polar residues predominate over residues A754–L769. Positions A754–D791 are disordered. Residues Q770 to E779 show a composition bias toward acidic residues.

Belongs to the ABC transporter superfamily. ABCB family. Mitochondrial peptide exporter (TC 3.A.1.212) subfamily.

Its subcellular location is the cell membrane. Functionally, pleiotropic ABC efflux transporter that may be involved in A.fumigatus adaptation to azoles. This is ABC multidrug transporter mdr2 from Aspergillus fumigatus (strain ATCC MYA-4609 / CBS 101355 / FGSC A1100 / Af293) (Neosartorya fumigata).